The sequence spans 358 residues: Thiol protease aleurain (358 aa).

The first 21 residues, 1-21 (MSAKTILSSVVLVVLVAASAA), serve as a signal peptide directing secretion. Residues 22 to 42 (ANIGFDESNPIRMVSDGLREV) are interaction with VSR1. Positions 22–140 (ANIGFDESNP…KGSHKVTEAA (119 aa)) are cleaved as a propeptide — activation peptide. N-linked (GlcNAc...) asparagine glycosylation occurs at Asn125. Intrachain disulfides connect Cys162-Cys205 and Cys196-Cys238. The active site involves Cys165. N-linked (GlcNAc...) asparagine glycosylation occurs at Asn254. A disulfide bond links Cys296 and Cys346. Active-site residues include His305 and Asn325.

Belongs to the peptidase C1 family. As to quaternary structure, interacts with VSR1/BP80B. As to expression, expressed in leaves (at protein level).

Its subcellular location is the vacuole. It catalyses the reaction Hydrolysis of proteins, acting as an aminopeptidase (notably, cleaving Arg-|-Xaa bonds) as well as an endopeptidase.. Functionally, may play a role in proteolysis leading to mobilization of nitrogen during senescence and starvation. The sequence is that of Thiol protease aleurain from Arabidopsis thaliana (Mouse-ear cress).